Consider the following 157-residue polypeptide: Peptide methionine sulfoxide reductase MsrA (157 aa).

Cysteine 10 is an active-site residue.

It belongs to the MsrA Met sulfoxide reductase family.

It catalyses the reaction L-methionyl-[protein] + [thioredoxin]-disulfide + H2O = L-methionyl-(S)-S-oxide-[protein] + [thioredoxin]-dithiol. The catalysed reaction is [thioredoxin]-disulfide + L-methionine + H2O = L-methionine (S)-S-oxide + [thioredoxin]-dithiol. In terms of biological role, has an important function as a repair enzyme for proteins that have been inactivated by oxidation. Catalyzes the reversible oxidation-reduction of methionine sulfoxide in proteins to methionine. In Clostridium perfringens (strain 13 / Type A), this protein is Peptide methionine sulfoxide reductase MsrA.